The following is a 56-amino-acid chain: MSLRPCLTPSSMQYSDIYIHHTHTPHPHHTHTHTHHTPTHSLTSTFTLAVTPYPAF.

Positions 21 to 38 (HTHTPHPHHTHTHTHHTP) are enriched in basic residues. The interval 21–40 (HTHTPHPHHTHTHTHHTPTH) is disordered.

This is an uncharacterized protein from Saccharomyces cerevisiae (strain ATCC 204508 / S288c) (Baker's yeast).